A 118-amino-acid chain; its full sequence is Large ribosomal subunit protein bL20 (118 aa).

It belongs to the bacterial ribosomal protein bL20 family.

Its function is as follows. Binds directly to 23S ribosomal RNA and is necessary for the in vitro assembly process of the 50S ribosomal subunit. It is not involved in the protein synthesizing functions of that subunit. The chain is Large ribosomal subunit protein bL20 from Tolumonas auensis (strain DSM 9187 / NBRC 110442 / TA 4).